The following is a 390-amino-acid chain: Pepsin B (390 aa).

An N-terminal signal peptide occupies residues 1–16 (MKIQVLVLVCLHLSEG). The propeptide at 17–59 (VERIILKKGKSIRQVMEERGVLETFLRNHPKVDPAAKYLFNND) is activation peptide. In terms of domain architecture, Peptidase A1 spans 74–387 (YFGEISIGTP…DMAANRVGFA (314 aa)). The active site involves D92. Intrachain disulfides connect C105/C110 and C269/C273. The active site involves D278. The cysteines at positions 312 and 345 are disulfide-linked.

This sequence belongs to the peptidase A1 family.

It is found in the secreted. The enzyme catalyses Degradation of gelatin, little activity on hemoglobin. Specificity on B chain of insulin more restricted than that of pepsin A. Does not cleave 1-Phe-|-Val-2, 4-Gln-|-His-5 or 23-Gly-|-Phe-24.. Its function is as follows. Hydrolyzes various peptides including beta-endorphin, insulin B chain, dynorphin A, and neurokinin A, with high specificity for the cleavage of the Phe-Xaa bonds. This is Pepsin B (PGB) from Canis lupus familiaris (Dog).